Reading from the N-terminus, the 330-residue chain is MQPQSVLHSGYFHPLLRAWQTATTTLNASNLIYPIFVTDVPDDIQPIASLPGVARYGVNRLEEMLRPLVEEGLRCVLIFGIPSRVPKDERGSAADSEESPAIEAIHLLRKTFPNLLVACDICLCPYTSHGHCGLLSENGAFRAEESRQRLAEVALAYAKAGCQVVAPSDMMDGRVEAIKEALMAHGLGNRVSVMSYSAKFASCFYGPFRDAAQSSPAFGDRRCYQLPPGARGLALRAVDRDVREGADVLMVKPGMPYLDIVREVKDKHPDLPLAVYHVSGEFAMLWHGAQAGAFDLKAAVLEAMTAFRRAGADIIITYYTPQLLQWLKKE.

4 residues coordinate Zn(2+): C122, C124, H131, and C132. K199 acts as the Schiff-base intermediate with substrate in catalysis. N6-succinyllysine is present on K199. R209 is a binding site for 5-aminolevulinate. Residue S215 is modified to Phosphoserine. R221 is a 5-aminolevulinate binding site. C223 is a Zn(2+) binding site. K252 functions as the Schiff-base intermediate with substrate in the catalytic mechanism. K252 is subject to N6-succinyllysine. 2 residues coordinate 5-aminolevulinate: S279 and Y318.

Belongs to the ALAD family. In terms of assembly, homooctamer; active form. Homohexamer; low activity form. The cofactor is Zn(2+).

It localises to the cytoplasm. It is found in the cytosol. It carries out the reaction 2 5-aminolevulinate = porphobilinogen + 2 H2O + H(+). It participates in porphyrin-containing compound metabolism; protoporphyrin-IX biosynthesis; coproporphyrinogen-III from 5-aminolevulinate: step 1/4. With respect to regulation, can alternate between a fully active homooctamer and a low-activity homohexamer. A bound magnesium ion may promote the assembly of the fully active homooctamer. The magnesium-binding site is absent in the low-activity homohexamer. Inhibited by compounds that favor the hexameric state. Inhibited by divalent lead ions. The lead ions partially displace the zinc cofactor. Functionally, catalyzes an early step in the biosynthesis of tetrapyrroles. Binds two molecules of 5-aminolevulinate per subunit, each at a distinct site, and catalyzes their condensation to form porphobilinogen. The chain is Delta-aminolevulinic acid dehydratase (ALAD) from Macaca fascicularis (Crab-eating macaque).